Here is a 200-residue protein sequence, read N- to C-terminus: Bombinin-like peptides 3 (200 aa).

A signal peptide (or 18) is located at residues 1-16 (MNFKYIVAVSILIASA). Residues F68 and F129 each carry the phenylalanine amide modification.

This sequence belongs to the bombinin family. As to expression, expressed by the skin glands.

Its subcellular location is the secreted. Functionally, has antimicrobial activity, but no hemolytic activity. Preference on killing Gram-negative non-enteric bacteria. The chain is Bombinin-like peptides 3 from Bombina orientalis (Oriental fire-bellied toad).